Reading from the N-terminus, the 767-residue chain is Two-component response regulator-like PRR73 (767 aa).

A disordered region spans residues 1-64 (MGSACEAGTD…EPQQTDEQKE (64 aa)). Residues 82–200 (RVLLVENDDS…ELKNLWQHVW (119 aa)) form the Response regulatory domain. Residues 205–214 (SSSGSGSESG) are compositionally biased toward low complexity. 5 disordered regions span residues 205-272 (SSSG…QSSW), 312-388 (RWLP…NEPT), 476-546 (ASNQ…RGKV), 646-701 (ANYS…SGSG), and 727-767 (NFGK…DEDR). Residues 238 to 252 (DNEDDDDNDEDDDDL) are compositionally biased toward acidic residues. Polar residues-rich tracts occupy residues 263 to 272 (DNGSGTQSSW), 343 to 361 (RNSS…VNPT), and 488 to 497 (CSPQDNSSEA). Low complexity predominate over residues 518-531 (GSNGSSNNNDMGSS). Residues 532–543 (TKNAITKPSSNR) are compositionally biased toward polar residues. Positions 689–700 (GAGGGNGSGSGS) are enriched in gly residues. The CCT domain maps to 712–754 (REAALNKFRQKRKVRNFGKKVRYQSRKRLAEQRPRIRGQFVRQ). Residues 727-738 (NFGKKVRYQSRK) are compositionally biased toward basic residues.

This sequence belongs to the ARR-like family.

It is found in the nucleus. Functionally, controls photoperiodic flowering response. Seems to be one of the component of the circadian clock. Expression of several members of the ARR-like family is controlled by circadian rhythm. The particular coordinated sequential expression of PRR73, PRR37, PRR95, PRR59 and PPR1 result to circadian waves that may be at the basis of the endogenous circadian clock. The sequence is that of Two-component response regulator-like PRR73 (PRR73) from Oryza sativa subsp. japonica (Rice).